We begin with the raw amino-acid sequence, 318 residues long: Phospholipid scramblase 1 (318 aa).

Residues 1–14 are compositionally biased toward polar residues; that stretch reads MDKQNSQMNASHPE. A disordered region spans residues 1 to 64; it reads MDKQNSQMNA…GPGPAGFPVP (64 aa). Positions 1-84 are proline-rich domain (PRD); sequence MDKQNSQMNA…NQPVGAAGVP (84 aa). Topologically, residues 1 to 288 are cytoplasmic; sequence MDKQNSQMNA…IQFPLDLDVK (288 aa). Residues 18–26 carry the SH3-binding 1 motif; the sequence is PVGYPPQYP. 2 short sequence motifs (PPXY motif) span residues 22 to 25 and 33 to 36; these read PPQY and PPGY. A compositionally biased stretch (low complexity) spans 31-44; that stretch reads QGPPGYSGYPGPQV. The SH3-binding 2 signature appears at 42–50; the sequence is PQVSYPPPP. 2 positions are modified to phosphotyrosine; by ABL: Tyr-69 and Tyr-74. The short motif at 84-92 is the SH3-binding 3 element; it reads PWMPAPQPP. Residues 99-290 are interaction with hepatitis C virus E2 glycoprotein; sequence LEYLSQIDQI…FPLDLDVKMK (192 aa). Phosphothreonine; by PKC/PRKCD is present on Thr-161. S-palmitoyl cysteine attachment occurs at residues Cys-184, Cys-185, Cys-186, Cys-188, and Cys-189. Positions 257–266 match the Nuclear localization signal motif; the sequence is GKISKHWTGI. The chain crosses the membrane as a helical span at residues 289-305; that stretch reads MKAVMIGACFLIDFMFF. The Extracellular portion of the chain corresponds to 306–318; it reads ESTGSQEQKSGVW.

The protein belongs to the phospholipid scramblase family. In terms of assembly, forms homooligomers in the presence of calcium. Interacts with ABL. Interacts with RELT, RELL1 and RELL2. Interacts with OXSR1 in the presence of RELT. Interacts with TOP2A and TOP2B. Interacts with OCLN. Interacts with TRPC5. Interacts with TRPC1 and TRPC4. Interacts with ILDR1. (Microbial infection) Interacts with hepatitis C virus E1 and E2 glycoproteins. As to quaternary structure, (Microbial infection) Interacts with T-cell leukemia virus (HTLV)-1 protein Tax (via N-terminus); this interaction represses Tax homodimerization. In terms of assembly, (Microbial infection) Interacts with HIV-1 protein Tat; this interaction represses the Tat-dependent transactivation of the HIV-1 long terminal repeat (LTR) and reduces the nuclear translocation of Tat. (Microbial infection) Interacts with hepatitis B virus protein HBx; this interaction promotes the proteasomal degradation of HBx. As to quaternary structure, (Microbial infection) Interacts with human cytomegalovirus proteins IE1 and IE2. In terms of assembly, (Microbial infection) Interacts with Epstein Barr virus (EBV) lytic switch protein BZLF1; this interaction negatively regulates the transcriptional regulatory activity of BZLF1 by preventing the formation of the BZLF1-CBP complex. (Microbial infection) Interacts with influenza virus nucleoprotein NP. Ca(2+) serves as cofactor. Mg(2+) is required as a cofactor. Requires Zn(2+) as cofactor. In terms of processing, phosphorylation at Thr-161 by PKC/PKCD increases its phospholipid scramblase activity during both cell stimulation and apoptosis. Phosphorylated by OXSR1 in the presence of RELT. Post-translationally, palmitoylation is required for its phospholipid scramblase activity. Palmitoylation regulates its localization to the cell membrane or the nucleus; trafficking to the cell membrane is dependent upon palmitoylation whereas in the absence of palmitoylation, localizes to the nucleus. In terms of tissue distribution, expressed in platelets, erythrocyte membranes, lymphocytes, spleen, thymus, prostate, testis, uterus, intestine, colon, heart, placenta, lung, liver, kidney and pancreas. Not detected in brain and skeletal muscle.

The protein resides in the cell membrane. The protein localises to the nucleus. It localises to the cytoplasm. Its subcellular location is the perinuclear region. The enzyme catalyses a 1,2-diacyl-sn-glycero-3-phosphocholine(in) = a 1,2-diacyl-sn-glycero-3-phosphocholine(out). The catalysed reaction is a 1,2-diacyl-sn-glycero-3-phosphoethanolamine(in) = a 1,2-diacyl-sn-glycero-3-phosphoethanolamine(out). It carries out the reaction a 1,2-diacyl-sn-glycero-3-phospho-L-serine(in) = a 1,2-diacyl-sn-glycero-3-phospho-L-serine(out). With respect to regulation, activated by Pb(2+) and Hg(2+) ions. Phosphorylation at Thr-161 by PKC/PKCD increases its phospholipid scramblase activity during both cell stimulation and apoptosis. Its function is as follows. Catalyzes calcium-induced ATP-independent rapid bidirectional and non-specific movement of phospholipids (lipid scrambling or lipid flip-flop) between the inner and outer leaflet of the plasma membrane resulting in collapse of the phospholipid asymmetry which leads to phosphatidylserine externalization on the cell surface. Mediates calcium-dependent phosphatidylserine externalization and apoptosis in neurons via its association with TRPC5. Also exhibits magnesium-dependent nuclease activity against double-stranded DNA and RNA but not single-stranded DNA and can enhance DNA decatenation mediated by TOP2A. Negatively regulates FcR-mediated phagocytosis in differentiated macrophages. May contribute to cytokine-regulated cell proliferation and differentiation. May play a role in the antiviral response of interferon (IFN) by amplifying and enhancing the IFN response through increased expression of select subset of potent antiviral genes. Inhibits the functions of viral transactivators, including human T-cell leukemia virus (HTLV)-1 protein Tax, human immunodeficiency virus (HIV)-1 Tat, human hepatitis B virus (HBV) HBx, Epstein-Barr virus (EBV) BZLF1 and human cytomegalovirus IE1 and IE2 proteins through direct interactions. Also mediates the inhibition of influenza virus infection by preventing nuclear import of the viral nucleoprotein/NP. Plays a crucial role as a defense factor against SARS-CoV-2 independently of its scramblase activity by directly targeting nascent viral vesicles to prevent virus-membrane fusion and the release of viral RNA into the host-cell cytosol. Functionally, (Microbial infection) Acts as an attachment receptor for HCV. This chain is Phospholipid scramblase 1 (PLSCR1), found in Homo sapiens (Human).